The chain runs to 380 residues: Outer mitochondrial transmembrane helix translocase (380 aa).

The Mitochondrial intermembrane segment spans residues 1–18 (MLSDIPRDALLRPLTRNE). Residues 19 to 37 (VVGMLVRLTVFGAATYYSI) traverse the membrane as a helical segment. Residues 38–380 (KWVVDALDPT…PANLREVPLD (343 aa)) are Cytoplasmic-facing. 136–143 (GPPGCGKT) lines the ATP pocket.

Belongs to the AAA ATPase family. MSP1 subfamily.

Its subcellular location is the mitochondrion outer membrane. The protein localises to the peroxisome membrane. The protein resides in the postsynaptic cell membrane. It carries out the reaction [protein]-with a C-terminal TM segment(out) + ATP + H2O = [protein]-with a C-terminal TM segment(in) + ADP + phosphate + H(+). Functionally, outer mitochondrial translocase required to remove mislocalized tail-anchored transmembrane proteins on mitochondria. Specifically recognizes and binds tail-anchored transmembrane proteins: acts as a dislocase that mediates the ATP-dependent extraction of mistargeted tail-anchored transmembrane proteins from the mitochondrion outer membrane. Also plays a critical role in regulating the surface expression of AMPA receptors (AMPAR), thereby regulating synaptic plasticity and learning and memory. The polypeptide is Outer mitochondrial transmembrane helix translocase (Danio rerio (Zebrafish)).